We begin with the raw amino-acid sequence, 356 residues long: Tungsten-containing aldehyde ferredoxin oxidoreductase cofactor-modifying protein (356 aa).

The Radical SAM core domain occupies 1–214; sequence MKYLYLEITS…PIVNELYKIA (214 aa). Residues cysteine 12, cysteine 16, and cysteine 19 each contribute to the [4Fe-4S] cluster site.

Belongs to the radical SAM superfamily. Requires [4Fe-4S] cluster as cofactor.

Involved in the biosynthesis of a molybdopterin-based tungsten cofactor. The polypeptide is Tungsten-containing aldehyde ferredoxin oxidoreductase cofactor-modifying protein (cmo) (Pyrococcus furiosus (strain ATCC 43587 / DSM 3638 / JCM 8422 / Vc1)).